Reading from the N-terminus, the 349-residue chain is Galanin receptor type 1 (349 aa).

Topologically, residues 1-36 (MELAVGNLSEGNASWPEPPAPEPGPLFGIGVENFVT) are extracellular. N-linked (GlcNAc...) asparagine glycosylation is found at asparagine 7 and asparagine 12. Residues 37–57 (LVVFGLIFALGVLGNSLVITV) traverse the membrane as a helical segment. The Cytoplasmic portion of the chain corresponds to 58-70 (LARSKPGKPRSTT). The helical transmembrane segment at 71–91 (NLFILNLSIADLAYLLFCIPF) threads the bilayer. Over 92 to 109 (QATVYALPTWVLGAFICK) the chain is Extracellular. Cysteine 108 and cysteine 187 are joined by a disulfide. The chain crosses the membrane as a helical span at residues 110-131 (FIHYFFTVSMLVSIFTLAAMSV). The Cytoplasmic segment spans residues 132-151 (DRYVAIVHSRRSSSLRVSRN). A helical membrane pass occupies residues 152 to 172 (ALLGVGCIWALSIAMASPVAY). The Extracellular segment spans residues 173–200 (HQGLFHPRASNQTFCWEQWPDPRHKKAY). Asparagine 183 is a glycosylation site (N-linked (GlcNAc...) asparagine). The chain crosses the membrane as a helical span at residues 201–221 (VVCTFVFGYLLPLLLICFCYA). The Cytoplasmic segment spans residues 222-248 (KVLNHLHKKLKNMSKKSEASKKKTAQT). A helical transmembrane segment spans residues 249-269 (VLVVVVVFGISWLPHHIIHLW). Topologically, residues 270–271 (AE) are extracellular. A helical transmembrane segment spans residues 272 to 292 (FGVFPLTPASFLFRITAHCLA). Residues 293 to 349 (YSNSSVNPIIYAFLSENFRKAYKQVFKCHIRKDSHLSDTKESKSRIDTPPSTNCTHV) are Cytoplasmic-facing. Cysteine 320 carries the S-palmitoyl cysteine lipid modification.

This sequence belongs to the G-protein coupled receptor 1 family. Interacts with GRP39 AND HTR1A. Palmitoylated on at least one of the three cysteine residues present in the C-terminal part.

It is found in the cell membrane. Receptor for the hormone galanin. The activity of this receptor is mediated by G proteins that inhibit adenylate cyclase activity. In Homo sapiens (Human), this protein is Galanin receptor type 1 (GALR1).